A 106-amino-acid polypeptide reads, in one-letter code: ATP-dependent Clp protease adapter protein ClpS (106 aa).

It belongs to the ClpS family. Binds to the N-terminal domain of the chaperone ClpA.

In terms of biological role, involved in the modulation of the specificity of the ClpAP-mediated ATP-dependent protein degradation. The chain is ATP-dependent Clp protease adapter protein ClpS from Escherichia coli O127:H6 (strain E2348/69 / EPEC).